The sequence spans 260 residues: MLNILKNWKNQQTAASNLERYTKEDILKGEIPEHIAIIMDGNGRWAKKRSLPRIAGHHEGMKVVKRTTKLANELGVKVLTLYAFSTENWKRPKMEVDFLMKLPEEFLNTYLPELVEENVQVRIIGDETALPAHTLRAIEKAVQDTAQNDGMILNFALNYGGRTEIVSAAKSLAEKVKEGSLNIEDIDESLFSTYLMTESLQDPELLIRTSGEIRLSNFMLWQVAYSEFVFTDVLWPDFKEDHFLQALGEFQQRGRRFGGI.

Asp-40 is an active-site residue. Asp-40 is a Mg(2+) binding site. Residues 41-44, Trp-45, Arg-53, His-57, and 85-87 contribute to the substrate site; these read GNGR and STE. Asn-88 functions as the Proton acceptor in the catalytic mechanism. Substrate is bound by residues Trp-89, Arg-91, Arg-208, and 214–216; that span reads RLS. Glu-227 contributes to the Mg(2+) binding site.

This sequence belongs to the UPP synthase family. Homodimer. It depends on Mg(2+) as a cofactor.

In terms of biological role, catalyzes the condensation of isopentenyl diphosphate (IPP) with allylic pyrophosphates generating different type of terpenoids. The sequence is that of Isoprenyl transferase from Bacillus subtilis (strain 168).